The primary structure comprises 804 residues: Phenylalanine--tRNA ligase beta subunit (804 aa).

Residues 38 to 148 (RAAFRAFTIA…ENAPVGTSFA (111 aa)) enclose the tRNA-binding domain. Residues 401–476 (HTARVIDFPV…RIHGINRIDP (76 aa)) form the B5 domain. Residues Asp-454, Asp-460, Glu-463, and Glu-464 each coordinate Mg(2+). The FDX-ACB domain occupies 710 to 803 (SLFQSLKRDY…VAKQTGGVLR (94 aa)).

This sequence belongs to the phenylalanyl-tRNA synthetase beta subunit family. Type 1 subfamily. As to quaternary structure, tetramer of two alpha and two beta subunits. It depends on Mg(2+) as a cofactor.

It localises to the cytoplasm. The enzyme catalyses tRNA(Phe) + L-phenylalanine + ATP = L-phenylalanyl-tRNA(Phe) + AMP + diphosphate + H(+). This chain is Phenylalanine--tRNA ligase beta subunit, found in Brucella suis biovar 1 (strain 1330).